The chain runs to 651 residues: DNA mismatch repair protein MutL (651 aa).

Positions 383 to 405 (TAAEEPTPAPTSPDLEIGDLDDQ) are disordered.

It belongs to the DNA mismatch repair MutL/HexB family.

This protein is involved in the repair of mismatches in DNA. It is required for dam-dependent methyl-directed DNA mismatch repair. May act as a 'molecular matchmaker', a protein that promotes the formation of a stable complex between two or more DNA-binding proteins in an ATP-dependent manner without itself being part of a final effector complex. This chain is DNA mismatch repair protein MutL, found in Lacticaseibacillus paracasei (strain ATCC 334 / BCRC 17002 / CCUG 31169 / CIP 107868 / KCTC 3260 / NRRL B-441) (Lactobacillus paracasei).